Here is a 335-residue protein sequence, read N- to C-terminus: Beta-ketoacyl-[acyl-carrier-protein] synthase III (335 aa).

Residues C117 and H258 contribute to the active site. The tract at residues 259-263 (QANQR) is ACP-binding. Residue N288 is part of the active site.

The protein belongs to the thiolase-like superfamily. FabH family. In terms of assembly, homodimer.

It is found in the cytoplasm. It carries out the reaction malonyl-[ACP] + acetyl-CoA + H(+) = 3-oxobutanoyl-[ACP] + CO2 + CoA. It participates in lipid metabolism; fatty acid biosynthesis. Functionally, catalyzes the condensation reaction of fatty acid synthesis by the addition to an acyl acceptor of two carbons from malonyl-ACP. Catalyzes the first condensation reaction which initiates fatty acid synthesis and may therefore play a role in governing the total rate of fatty acid production. Possesses both acetoacetyl-ACP synthase and acetyl transacylase activities. Its substrate specificity determines the biosynthesis of branched-chain and/or straight-chain of fatty acids. In Synechococcus elongatus (strain ATCC 33912 / PCC 7942 / FACHB-805) (Anacystis nidulans R2), this protein is Beta-ketoacyl-[acyl-carrier-protein] synthase III.